The sequence spans 960 residues: Gamma-aminobutyric acid type B receptor subunit 1 (960 aa).

The N-terminal stretch at 1 to 19 is a signal peptide; sequence MLLLLLVPLFLRPLGAGGA. At 20–590 the chain is on the extracellular side; it reads QTPNVTSEGC…KTFRFLSQKL (571 aa). Residues Asn23 and Asn83 are each glycosylated (N-linked (GlcNAc...) asparagine). Sushi domains follow at residues 29–95 and 97–158; these read CQII…PSRC and RICS…HCQV. Cystine bridges form between Cys99-Cys144, Cys130-Cys156, and Cys219-Cys245. The 4-aminobutanoate site is built by Ser246, Ser269, His286, and Tyr366. Cys375 and Cys409 are disulfide-bonded. Residues Asn408 and Asn439 are each glycosylated (N-linked (GlcNAc...) asparagine). A 4-aminobutanoate-binding site is contributed by Glu465. N-linked (GlcNAc...) asparagine glycosylation is found at Asn481, Asn501, and Asn513. The chain crosses the membrane as a helical span at residues 591-611; sequence FISVSVLSSLGIVLAVVCLSF. Residues 612 to 630 lie on the Cytoplasmic side of the membrane; it reads NIYNSHVRYIQNSQPNLNN. The helical transmembrane segment at 631–651 threads the bilayer; sequence LTAVGCSLALAAVFPLGLDGY. The Extracellular segment spans residues 652 to 666; that stretch reads HIGRSQFPFVCQARL. A helical membrane pass occupies residues 667-687; that stretch reads WLLGLGFSLGYGSMFTKIWWV. Residues 688–709 lie on the Cytoplasmic side of the membrane; it reads HTVFTKKEEKKEWRKTLEPWKL. Residues 710–730 traverse the membrane as a helical segment; the sequence is YATVGLLVGMDILTLAIWQIV. The Extracellular segment spans residues 731 to 767; it reads DPLHRTIETFAKEEPKEDIDVSILPQLEHCSSKKMNT. The chain crosses the membrane as a helical span at residues 768 to 788; the sequence is WLGIFYGYKGLLLLLGIFLAY. The Cytoplasmic segment spans residues 789–803; it reads ETKSVSTEKINDHRA. Residues 804–824 traverse the membrane as a helical segment; that stretch reads VGMAIYNVAVLCLITAPVTMI. Residues 825–832 are Extracellular-facing; it reads LSSQQDAA. Residues 833–853 traverse the membrane as a helical segment; the sequence is FAFASLAIVFSSYITLVVLFV. Residues 854 to 960 are Cytoplasmic-facing; sequence PKMRRLITRG…DGSRVHLLYK (107 aa). 2 disordered regions span residues 866–891 and 908–960; these read QSEA…RLLE and VSEL…LLYK. A compositionally biased stretch (polar residues) spans 867-879; that stretch reads SEAQDTMKTGSST. Residues 868–924 adopt a coiled-coil conformation; the sequence is EAQDTMKTGSSTNNNEEEKSRLLEKENRELEKIIAEKEERVSELRHQLQSRQQIRSR. At Thr872 the chain carries Phosphothreonine. Residues 887–915 form an interaction with ATF4 region; the sequence is SRLLEKENRELEKIIAEKEERVSELRHQL. At Thr929 the chain carries Phosphothreonine.

The protein belongs to the G-protein coupled receptor 3 family. GABA-B receptor subfamily. As to quaternary structure, heterodimer of GABBR1 and GABBR2. Homodimers may form, but are inactive. Interacts (via C-terminus) with ATF4 (via leucine zipper domain). Interacts with JAKMIP1. Interacts with KCTD8, KCTD12, KCTD12B and KCTD16; this interaction determines the pharmacology and kinetics of the receptor response, the KCTD proteins markedly accelerating the GABA-B response, although to different extents. In terms of tissue distribution, expressed in neuronal tissue including cortex, cerebellum and spinal cord. Not detected in non-neuronal tissues including heart, liver, spleen and kidney.

Its subcellular location is the cell membrane. The protein localises to the postsynaptic cell membrane. It is found in the cell projection. It localises to the dendrite. Component of a heterodimeric G-protein coupled receptor for GABA, formed by GABBR1 and GABBR2. Within the heterodimeric GABA receptor, only GABBR1 seems to bind agonists, while GABBR2 mediates coupling to G proteins. Ligand binding causes a conformation change that triggers signaling via guanine nucleotide-binding proteins (G proteins) and modulates the activity of down-stream effectors, such as adenylate cyclase. Signaling inhibits adenylate cyclase, stimulates phospholipase A2, activates potassium channels, inactivates voltage-dependent calcium-channels and modulates inositol phospholipid hydrolysis. Calcium is required for high affinity binding to GABA. Plays a critical role in the fine-tuning of inhibitory synaptic transmission. Pre-synaptic GABA receptor inhibits neurotransmitter release by down-regulating high-voltage activated calcium channels, whereas postsynaptic GABA receptor decreases neuronal excitability by activating a prominent inwardly rectifying potassium (Kir) conductance that underlies the late inhibitory postsynaptic potentials. Not only implicated in synaptic inhibition but also in hippocampal long-term potentiation, slow wave sleep, muscle relaxation and antinociception. The polypeptide is Gamma-aminobutyric acid type B receptor subunit 1 (Gabbr1) (Mus musculus (Mouse)).